The chain runs to 115 residues: Large ribosomal subunit protein bL20c (115 aa).

This sequence belongs to the bacterial ribosomal protein bL20 family.

Its subcellular location is the plastid. The protein localises to the chloroplast. In terms of biological role, binds directly to 23S ribosomal RNA and is necessary for the in vitro assembly process of the 50S ribosomal subunit. It is not involved in the protein synthesizing functions of that subunit. In Physcomitrium patens (Spreading-leaved earth moss), this protein is Large ribosomal subunit protein bL20c.